Reading from the N-terminus, the 209-residue chain is Large ribosomal subunit protein uL3 (209 aa).

Belongs to the universal ribosomal protein uL3 family. In terms of assembly, part of the 50S ribosomal subunit. Forms a cluster with proteins L14 and L19.

In terms of biological role, one of the primary rRNA binding proteins, it binds directly near the 3'-end of the 23S rRNA, where it nucleates assembly of the 50S subunit. In Clostridium botulinum (strain Okra / Type B1), this protein is Large ribosomal subunit protein uL3.